Consider the following 197-residue polypeptide: MRVAGGRALSRGAELRVPGGAKHGMCLLLGATGVGKTLLVKRLQEVSSRDGKGDLGEPPPTRPTVGTNLTDIVAQRKITIRELGGCMGPIWSSYYGNCRSLLFVMDASDPTQLSASCVQLLGLLSAEQLAEASVLILFNKIDLPCYMSTEEMKSLIRLPDIIACAKQNITTAEISAREGTGLAGVLAWLQATHRAND.

GTP contacts are provided by residues Gly-30 to Thr-37, Glu-82 to Cys-86, and Asn-139 to Asp-142.

Belongs to the small GTPase superfamily. Arf family. Interacts with RIGI; this interaction is GTP-dependent and induced upon viral infection; this interaction suppresses the RNA sensing activity of RIGI.

The protein localises to the cytoplasm. Its function is as follows. May suppress the RNA sensing activity of RIGI in a GTP-dependent. The chain is ADP-ribosylation factor-like protein 16 from Homo sapiens (Human).